Consider the following 1004-residue polypeptide: Kinesin-like protein KIN-7I (1004 aa).

The Kinesin motor domain maps to Lys6–Val326. Gly89 to Thr96 provides a ligand contact to ATP. Coiled-coil stretches lie at residues Val335–Arg402, Lys517–Ser576, and Ser634–Glu661. Disordered stretches follow at residues Glu567–Pro599, Ser628–Glu671, and Thr802–Thr830. Composition is skewed to basic and acidic residues over residues Ser569–Met582 and Ser634–Lys652. Positions Gln653–Leu663 are enriched in polar residues. A Glycyl lysine isopeptide (Lys-Gly) (interchain with G-Cter in ubiquitin) cross-link involves residue Lys881.

Belongs to the TRAFAC class myosin-kinesin ATPase superfamily. Kinesin family. KIN-7 subfamily.

The polypeptide is Kinesin-like protein KIN-7I (Arabidopsis thaliana (Mouse-ear cress)).